We begin with the raw amino-acid sequence, 437 residues long: Elongation factor Tu, mitochondrial (437 aa).

The N-terminal 38 residues, Met1 to Tyr38, are a transit peptide targeting the mitochondrion. Residues Lys46–Glu242 enclose the tr-type G domain. The segment at Gly55–Thr62 is G1. Residue Gly55–Thr62 coordinates GTP. A G2 region spans residues Gly96–Ser100. The interval Asp117–Gly120 is G3. GTP is bound by residues Asp117–His121 and Asn172–Asp175. Positions Asn172–Asp175 are G4. Residues Ser210 to Leu212 are G5.

It belongs to the TRAFAC class translation factor GTPase superfamily. Classic translation factor GTPase family. EF-Tu/EF-1A subfamily. The precursor is processed in two steps involving mitochondrial intermediate peptidase (MIP) and mitochondrial processing peptidase (MPP).

The protein localises to the mitochondrion. It participates in protein biosynthesis; polypeptide chain elongation. Its function is as follows. G-protein that, in its active GTP-bound form, binds to and delivers aminoacyl-tRNA to the A-site of ribosomes during protein biosynthesis. In the presence of a correct codon-anticodon match between the aminoacyl-tRNA and the A-site codon of the ribosome-bound mRNA, the ribosome acts as a GTPase activator and the GTP is hydrolyzed. The inactive GDP-bound form leaves the ribosome and must be recycled before binding another molecule of aminoacyl-tRNA. Required for mitochondrial protein biosynthesis and maintenance of mitochondrial DNA. This chain is Elongation factor Tu, mitochondrial (TUF1), found in Saccharomyces cerevisiae (strain ATCC 204508 / S288c) (Baker's yeast).